A 121-amino-acid chain; its full sequence is Basic phospholipase A2 homolog piratoxin-2 (121 aa).

Intrachain disulfides connect Cys26/Cys115, Cys28/Cys44, Cys43/Cys95, Cys49/Cys121, Cys50/Cys88, Cys57/Cys81, and Cys75/Cys86. The tract at residues 105–117 is important for membrane-damaging activities in eukaryotes and bacteria; heparin-binding; sequence KKYRYHLKPFCKK.

The protein belongs to the phospholipase A2 family. Group II subfamily. K49 sub-subfamily. In terms of assembly, homodimer; non-covalently linked. In terms of tissue distribution, expressed by the venom gland.

The protein resides in the secreted. Snake venom phospholipase A2 (PLA2) homolog that lacks enzymatic activity. Shows myotoxic activity and edema-inducing activities in vivo. A model of myotoxic mechanism has been proposed: an apo Lys49-PLA2 is activated by the entrance of a hydrophobic molecule (e.g. fatty acid) at the hydrophobic channel of the protein leading to a reorientation of a monomer. This reorientation causes a transition between 'inactive' to 'active' states, causing alignment of C-terminal and membrane-docking sites (MDoS) side-by-side and putting the membrane-disruption sites (MDiS) in the same plane, exposed to solvent and in a symmetric position for both monomers. The MDoS region stabilizes the toxin on membrane by the interaction of charged residues with phospholipid head groups. Subsequently, the MDiS region destabilizes the membrane with penetration of hydrophobic residues. This insertion causes a disorganization of the membrane, allowing an uncontrolled influx of ions (i.e. calcium and sodium), and eventually triggering irreversible intracellular alterations and cell death. This Bothrops pirajai (Piraja's lancehead) protein is Basic phospholipase A2 homolog piratoxin-2.